A 366-amino-acid chain; its full sequence is Patr class I histocompatibility antigen, C alpha chain (366 aa).

A signal peptide spans 1-24 (MRVTAPRTLLLLLSGGLALTETWA). Residues 25–114 (GSHSLRYFDT…LRGYYNQSED (90 aa)) form an alpha-1 region. The Extracellular segment spans residues 25–308 (GSHSLRYFDT…KPTSQPTIPI (284 aa)). The N-linked (GlcNAc...) asparagine glycan is linked to asparagine 110. Residues 115-206 (GSHTLQWMYG…ENGKETLQRT (92 aa)) are alpha-2. Cystine bridges form between cysteine 125–cysteine 192 and cysteine 227–cysteine 283. Positions 207–298 (ECPKTHMTHH…GLPEPLTLRW (92 aa)) are alpha-3. Residues 209–297 (PKTHMTHHPV…EGLPEPLTLR (89 aa)) enclose the Ig-like C1-type domain. The tract at residues 299–308 (KPTSQPTIPI) is connecting peptide. Residues 309–332 (VGIVAGLAVLAVLAVLGAVVTAMM) traverse the membrane as a helical segment. At 333-366 (CRRKSSGGKGGSCSQAACSNSAQGSDESLIACKA) the chain is on the cytoplasmic side. A phosphoserine mark is found at serine 357 and serine 360.

It belongs to the MHC class I family. As to quaternary structure, heterodimer of an alpha chain and a beta chain (beta-2-microglobulin).

It localises to the membrane. Involved in the presentation of foreign antigens to the immune system. This Pan troglodytes (Chimpanzee) protein is Patr class I histocompatibility antigen, C alpha chain.